Reading from the N-terminus, the 295-residue chain is Nucleotide-binding protein RD1_1380 (295 aa).

16 to 23 (GPSGAGRS) serves as a coordination point for ATP. 63–66 (DPRN) contacts GTP.

It belongs to the RapZ-like family.

Its function is as follows. Displays ATPase and GTPase activities. The chain is Nucleotide-binding protein RD1_1380 from Roseobacter denitrificans (strain ATCC 33942 / OCh 114) (Erythrobacter sp. (strain OCh 114)).